Here is a 231-residue protein sequence, read N- to C-terminus: MKILRKLLFWLILVPILLVLLMQLYFFLQIGWWVNHNPDSTSFMRQQLSVLQDKNPQAQLKHKWVPYKRISNNLKRAIIASEDSNFSGHEGIDWDALEKAYEKNVRKGKVVAGGSTITQQLAKNLFLSGDRSYIRKGQEVVITYMLEYWMDKERIFEIYLNVVEWGVGVFGAEAAAQHYYGTSAAQLSAPQAARLAVMLPNPRFYDTHRGTAYLGRRTDLILRRMGSAELP.

A helical transmembrane segment spans residues 7-27; sequence LLFWLILVPILLVLLMQLYFF.

Belongs to the glycosyltransferase 51 family.

The protein resides in the cell inner membrane. The enzyme catalyses [GlcNAc-(1-&gt;4)-Mur2Ac(oyl-L-Ala-gamma-D-Glu-L-Lys-D-Ala-D-Ala)](n)-di-trans,octa-cis-undecaprenyl diphosphate + beta-D-GlcNAc-(1-&gt;4)-Mur2Ac(oyl-L-Ala-gamma-D-Glu-L-Lys-D-Ala-D-Ala)-di-trans,octa-cis-undecaprenyl diphosphate = [GlcNAc-(1-&gt;4)-Mur2Ac(oyl-L-Ala-gamma-D-Glu-L-Lys-D-Ala-D-Ala)](n+1)-di-trans,octa-cis-undecaprenyl diphosphate + di-trans,octa-cis-undecaprenyl diphosphate + H(+). The protein operates within cell wall biogenesis; peptidoglycan biosynthesis. Peptidoglycan polymerase that catalyzes glycan chain elongation from lipid-linked precursors. This is Biosynthetic peptidoglycan transglycosylase from Herminiimonas arsenicoxydans.